The following is a 230-amino-acid chain: Ribosomal RNA small subunit methyltransferase I (230 aa).

The protein belongs to the methyltransferase superfamily. RsmI family.

Its subcellular location is the cytoplasm. It carries out the reaction cytidine(1402) in 16S rRNA + S-adenosyl-L-methionine = 2'-O-methylcytidine(1402) in 16S rRNA + S-adenosyl-L-homocysteine + H(+). Functionally, catalyzes the 2'-O-methylation of the ribose of cytidine 1402 (C1402) in 16S rRNA. The protein is Ribosomal RNA small subunit methyltransferase I of Hydrogenobaculum sp. (strain Y04AAS1).